The following is a 170-amino-acid chain: Ribosome maturation factor RimM (170 aa).

The PRC barrel domain occupies 98–170 (PDEYYWVDLE…RIVVDWDPEF (73 aa)).

It belongs to the RimM family. Binds ribosomal protein uS19.

It localises to the cytoplasm. In terms of biological role, an accessory protein needed during the final step in the assembly of 30S ribosomal subunit, possibly for assembly of the head region. Essential for efficient processing of 16S rRNA. May be needed both before and after RbfA during the maturation of 16S rRNA. It has affinity for free ribosomal 30S subunits but not for 70S ribosomes. This chain is Ribosome maturation factor RimM, found in Xylella fastidiosa (strain 9a5c).